A 156-amino-acid polypeptide reads, in one-letter code: Endoribonuclease YbeY (156 aa).

Zn(2+) contacts are provided by His-122, His-126, and His-132.

It belongs to the endoribonuclease YbeY family. Zn(2+) is required as a cofactor.

It is found in the cytoplasm. Functionally, single strand-specific metallo-endoribonuclease involved in late-stage 70S ribosome quality control and in maturation of the 3' terminus of the 16S rRNA. The sequence is that of Endoribonuclease YbeY from Geobacillus thermodenitrificans (strain NG80-2).